The chain runs to 1212 residues: Myosin-1 (1212 aa).

The segment at 1-35 (MGITRRGKDKAAAGQAVAGGASGGRARPKKATFET) is disordered. In terms of domain architecture, Myosin motor spans 41–715 (VGVSDLTLLS…TLFALEHMRD (675 aa)). Residue 134 to 141 (GESGAGKT) participates in ATP binding. Residues 405-487 (SVGILDIYGF…PGVFSALKDA (83 aa)) are actin-binding. 2 IQ domains span residues 719–739 (HNMATRIQRMWRAYLAYRAES) and 740–765 (ATRIQTFWRKKRTGAEYLQLRDHGHR). One can recognise a TH1 domain in the interval 773-962 (RRRMSILGSR…AVHTQQGEPP (190 aa)). 2 disordered regions span residues 947-1064 (DFYK…APPA) and 1115-1212 (PAAY…DDDW). A compositionally biased stretch (polar residues) spans 954–966 (VHTQQGEPPNSVS). Low complexity-rich tracts occupy residues 987–998 (RPGGPNGRPARG) and 1008–1052 (PGGA…ASVR). The span at 1053-1062 (APPPPPPAAP) shows a compositional bias: pro residues. The 60-residue stretch at 1065–1124 (KAKIMAKVLYDFAGQKENEMSIKEGDLIEIVQKENNGWWLAKSGNQQAWVPAAYVEEQKQ) folds into the SH3 domain. Pro residues predominate over residues 1125–1140 (APPPVAASRPPPPAPP). Residues 1171 to 1190 (MSLNGSDGSRSNTPTPSLGN) are compositionally biased toward polar residues.

It belongs to the TRAFAC class myosin-kinesin ATPase superfamily. Myosin family.

The protein localises to the cytoplasm. It is found in the cytoskeleton. Its subcellular location is the actin patch. Functionally, type-I myosin implicated in the organization of the actin cytoskeleton. Required for proper actin cytoskeleton polarization. At the cell cortex, assembles in patch-like structures together with proteins from the actin-polymerizing machinery and promotes actin assembly. Functions as actin nucleation-promoting factor (NPF) for the Arp2/3 complex. The sequence is that of Myosin-1 (MYO1) from Pyricularia oryzae (strain 70-15 / ATCC MYA-4617 / FGSC 8958) (Rice blast fungus).